A 592-amino-acid polypeptide reads, in one-letter code: Beta-fructofuranosidase, insoluble isoenzyme 2 (592 aa).

The signal sequence occupies residues 1–40 (MLIRCFHIKMALVTCFHSMLFLSAVVFIFSLDVNIRGVEA). Asp75 is a catalytic residue. N-linked (GlcNAc...) asparagine glycans are attached at residues Asn171, Asn195, Asn310, Asn347, and Asn568.

The protein belongs to the glycosyl hydrolase 32 family.

Its subcellular location is the secreted. It localises to the cell wall. The enzyme catalyses Hydrolysis of terminal non-reducing beta-D-fructofuranoside residues in beta-D-fructofuranosides.. May play an important role in phloem unloading and in stress response. This Daucus carota (Wild carrot) protein is Beta-fructofuranosidase, insoluble isoenzyme 2 (INV2).